We begin with the raw amino-acid sequence, 237 residues long: Large ribosomal subunit protein bL25 (237 aa).

An N-terminal domain region spans residues 1–104; the sequence is MELTAKPRTP…SVPVHTTGRS (104 aa). Positions 105-189 are middle domain; that stretch reads QGEVQGGLVD…ELEAEVQAAQ (85 aa). The segment at 190-237 is C-terminal domain; sequence VAGLVAAGELSEEAAEAVLEGDASLEEVKAEASEDNAGTDSEDNSDAQ. Residues 205 to 237 are disordered; that stretch reads EAVLEGDASLEEVKAEASEDNAGTDSEDNSDAQ.

Belongs to the bacterial ribosomal protein bL25 family. CTC subfamily. As to quaternary structure, part of the 50S ribosomal subunit. Contacts proteins L11 and L16, the A site tRNA, and the 5S and 23S rRNAs.

This is one of 3 proteins that mediate the attachment of the 5S rRNA onto the large ribosomal subunit. This protein has three domains. The N-terminal one is bound on the solvent face, the middle domain fills the space between the 5S rRNA and the L11 arm contacting the 23S rRNA while the C-terminal domain is on the edge of the intersubunit interface and contacts the A site. The protein conformation changes upon binding of a tRNA mimic to the A site, although the mimic does not interact directly with CTC itself, consistent with CTCs presumed role in moderating A site binding. The chain is Large ribosomal subunit protein bL25 (rplY) from Deinococcus radiodurans (strain ATCC 13939 / DSM 20539 / JCM 16871 / CCUG 27074 / LMG 4051 / NBRC 15346 / NCIMB 9279 / VKM B-1422 / R1).